Here is a 278-residue protein sequence, read N- to C-terminus: MRSNMHQGHVARKRFGQNFLVDDSIIHGIVNAINPLADDVLVEIGPGLGALTDPLLERVPQMQVVELDRDLVERLRRRYGDRLQVHAGDALAFDFGRLAVPGRPLRIVGNLPYNISSPLLFHLMDYADHVHDQHFMLQKEVVDRMVAEPGSKAFGRLSIMLQVRYHMEHVLDVPPGSFNPPPKVDSAVVRMIPWPRTESGRLRSPHADCDITVLGDLVTAAFSQRRKVLRNTLSFLRDQIDFEAIGFDLGRRAEEVPVGEYVELARRLGGDASDRSAA.

N18, L20, G45, E66, D89, and N110 together coordinate S-adenosyl-L-methionine.

It belongs to the class I-like SAM-binding methyltransferase superfamily. rRNA adenine N(6)-methyltransferase family. RsmA subfamily.

Its subcellular location is the cytoplasm. The enzyme catalyses adenosine(1518)/adenosine(1519) in 16S rRNA + 4 S-adenosyl-L-methionine = N(6)-dimethyladenosine(1518)/N(6)-dimethyladenosine(1519) in 16S rRNA + 4 S-adenosyl-L-homocysteine + 4 H(+). In terms of biological role, specifically dimethylates two adjacent adenosines (A1518 and A1519) in the loop of a conserved hairpin near the 3'-end of 16S rRNA in the 30S particle. May play a critical role in biogenesis of 30S subunits. The chain is Ribosomal RNA small subunit methyltransferase A from Cupriavidus pinatubonensis (strain JMP 134 / LMG 1197) (Cupriavidus necator (strain JMP 134)).